Consider the following 413-residue polypeptide: L-cysteine:1D-myo-inositol 2-amino-2-deoxy-alpha-D-glucopyranoside ligase (413 aa).

Cys43 lines the Zn(2+) pocket. L-cysteinyl-5'-AMP is bound by residues 43 to 46 (CGIT), Thr58, and 81 to 83 (NIT). Positions 45–55 (ITPYDATHLGH) match the 'HIGH' region motif. The short motif at 187–192 (ERGGDP) is the 'ERGGDP' region element. Residue Trp227 participates in L-cysteinyl-5'-AMP binding. Cys231 is a Zn(2+) binding site. 249-251 (GND) is an L-cysteinyl-5'-AMP binding site. His256 serves as a coordination point for Zn(2+). Val283 serves as a coordination point for L-cysteinyl-5'-AMP. Residues 289 to 293 (KMSKS) carry the 'KMSKS' region motif.

The protein belongs to the class-I aminoacyl-tRNA synthetase family. MshC subfamily. In terms of assembly, monomer. Requires Zn(2+) as cofactor.

It catalyses the reaction 1D-myo-inositol 2-amino-2-deoxy-alpha-D-glucopyranoside + L-cysteine + ATP = 1D-myo-inositol 2-(L-cysteinylamino)-2-deoxy-alpha-D-glucopyranoside + AMP + diphosphate + H(+). Functionally, catalyzes the ATP-dependent condensation of GlcN-Ins and L-cysteine to form L-Cys-GlcN-Ins. This is L-cysteine:1D-myo-inositol 2-amino-2-deoxy-alpha-D-glucopyranoside ligase from Gordonia bronchialis (strain ATCC 25592 / DSM 43247 / BCRC 13721 / JCM 3198 / KCTC 3076 / NBRC 16047 / NCTC 10667) (Rhodococcus bronchialis).